The chain runs to 263 residues: N-acetylgalactosamine permease IID component (263 aa).

Residues 3 to 263 (SEISKKDITR…SIVCSAFGIL (261 aa)) form the PTS EIID domain. 6 consecutive transmembrane segments (helical) span residues 61 to 81 (LEFINTHPNLVGFLMGLLISM), 98 to 118 (LFGPIAGIGDAIFWFTLLPIM), 131 to 151 (LLGPILFFAVYLLIFFLRVGW), 178 to 198 (TILGITVIGGLIASYVHINVV), 215 to 235 (FFDKVFPNILPMAYTLLMYYF), and 243 to 263 (PVLLIGVTFVLSIVCSAFGIL).

The protein resides in the cell inner membrane. The phosphoenolpyruvate-dependent sugar phosphotransferase system (PTS), a major carbohydrate active -transport system, catalyzes the phosphorylation of incoming sugar substrates concomitant with their translocation across the cell membrane. This system is involved in N-acetylgalactosamine transport. The sequence is that of N-acetylgalactosamine permease IID component (agaD) from Escherichia coli (strain K12).